The sequence spans 106 residues: MHTYIYIYTVYIQMVAFSPYRIVLPFVAFVDLASFSSFRSYQAFLRPFLRPFRHQTCSSYFALDLDFASAFVVPAASFVESLLAYQAYSAYQACLAYPACLACQAS.

A run of 2 helical transmembrane segments spans residues 10–30 and 65–85; these read VYIQ…VAFV and LDFA…LLAY.

It is found in the membrane. This is an uncharacterized protein from Saccharomyces cerevisiae (strain ATCC 204508 / S288c) (Baker's yeast).